The sequence spans 147 residues: MLDIMQIQEILPHRYPLLLVDRITDMEVKKSIKGYKNISISEPAFQGHFPGHPIYPGVLILEGMAQCGGVLALKSSDLTDEEMKEKVIYFMSIDNAKFRNPVRPGDRLDYELTAVKMKSTLMVLEGKAYVDGKLTAEAEFKAMIVDK.

The active site involves histidine 48.

The protein belongs to the thioester dehydratase family. FabZ subfamily.

Its subcellular location is the cytoplasm. The enzyme catalyses a (3R)-hydroxyacyl-[ACP] = a (2E)-enoyl-[ACP] + H2O. Its function is as follows. Involved in unsaturated fatty acids biosynthesis. Catalyzes the dehydration of short chain beta-hydroxyacyl-ACPs and long chain saturated and unsaturated beta-hydroxyacyl-ACPs. In Aliarcobacter butzleri (strain RM4018) (Arcobacter butzleri), this protein is 3-hydroxyacyl-[acyl-carrier-protein] dehydratase FabZ.